We begin with the raw amino-acid sequence, 278 residues long: Ribosomal RNA small subunit methyltransferase A (278 aa).

S-adenosyl-L-methionine contacts are provided by Asn27, Leu29, Gly54, Glu75, Asp101, and Asn122.

It belongs to the class I-like SAM-binding methyltransferase superfamily. rRNA adenine N(6)-methyltransferase family. RsmA subfamily.

Its subcellular location is the cytoplasm. The catalysed reaction is adenosine(1518)/adenosine(1519) in 16S rRNA + 4 S-adenosyl-L-methionine = N(6)-dimethyladenosine(1518)/N(6)-dimethyladenosine(1519) in 16S rRNA + 4 S-adenosyl-L-homocysteine + 4 H(+). In terms of biological role, specifically dimethylates two adjacent adenosines (A1518 and A1519) in the loop of a conserved hairpin near the 3'-end of 16S rRNA in the 30S particle. May play a critical role in biogenesis of 30S subunits. In Brucella anthropi (strain ATCC 49188 / DSM 6882 / CCUG 24695 / JCM 21032 / LMG 3331 / NBRC 15819 / NCTC 12168 / Alc 37) (Ochrobactrum anthropi), this protein is Ribosomal RNA small subunit methyltransferase A.